Reading from the N-terminus, the 280-residue chain is Putative pyruvate, phosphate dikinase regulatory protein (280 aa).

154–161 (GVSRTSKT) serves as a coordination point for ADP.

It belongs to the pyruvate, phosphate/water dikinase regulatory protein family. PDRP subfamily.

It catalyses the reaction N(tele)-phospho-L-histidyl/L-threonyl-[pyruvate, phosphate dikinase] + ADP = N(tele)-phospho-L-histidyl/O-phospho-L-threonyl-[pyruvate, phosphate dikinase] + AMP + H(+). The enzyme catalyses N(tele)-phospho-L-histidyl/O-phospho-L-threonyl-[pyruvate, phosphate dikinase] + phosphate + H(+) = N(tele)-phospho-L-histidyl/L-threonyl-[pyruvate, phosphate dikinase] + diphosphate. Functionally, bifunctional serine/threonine kinase and phosphorylase involved in the regulation of the pyruvate, phosphate dikinase (PPDK) by catalyzing its phosphorylation/dephosphorylation. The protein is Putative pyruvate, phosphate dikinase regulatory protein of Nitrobacter winogradskyi (strain ATCC 25391 / DSM 10237 / CIP 104748 / NCIMB 11846 / Nb-255).